Consider the following 955-residue polypeptide: Leucine-rich repeat-containing G-protein coupled receptor 4 (955 aa).

The N-terminal stretch at 1 to 21 is a signal peptide; that stretch reads MGCPGWPLALFALLLASCSGG. Topologically, residues 22-547 are extracellular; the sequence is PSGVSSPAPC…LLGSWMIRLT (526 aa). Positions 26–59 constitute an LRRNT domain; it reads SSPAPCPAPCACDLDGGADCSGKGLVTVPDGLSV. Cystine bridges form between cysteine 31/cysteine 37 and cysteine 35/cysteine 45. 10 LRR repeats span residues 57–81, 83–105, 106–129, 131–153, 155–177, 178–201, 203–225, 226–249, 250–272, and 274–296; these read LSVFTHSLDLSMNNITKLPEGAFKG, PYLEELRLAGNDLSIIHPMALSG, LKELKVLTLQNNQLKTVPSESLKG, VSLQSLRLDANHIVTVPEDSFEG, VQLRHLWLDDNSLTEVPIRPLSN, LPSLQALTLALNKISHIPDYAFSN, SSLVVLHLHNNKIRTLGPHCFHG, LDNLEALDLNYNNLIDFPDSIRSL, PNLKELGFHSNSITIIPDGAFVK, and PLLRTIHLYDNPLSFVGNSAFQN. Asparagine 201 carries N-linked (GlcNAc...) asparagine glycosylation. Asparagine 296 and asparagine 316 each carry an N-linked (GlcNAc...) asparagine glycan. LRR repeat units follow at residues 320–343, 345–365, 366–389, 390–413, and 415–437; these read TNNLESLTLTGTKIRSIPIKFCQE, KMLRTLDLSYNEISALVGFEG, CSSLEEVYLQNNQIQEVQNETFQG, LAALRMLDLSRNRIHTIHKEAFVT, and KALTNLDLSFNDLTAFPTAGLHG. Cysteine 341 and cysteine 366 are disulfide-bonded. An N-linked (GlcNAc...) asparagine glycan is attached at asparagine 384. Intrachain disulfides connect cysteine 472-cysteine 525 and cysteine 473-cysteine 478. The chain crosses the membrane as a helical span at residues 548-568; the sequence is VWFIFLLALIFNVIVIVTMFA. Residues 569–578 lie on the Cytoplasmic side of the membrane; that stretch reads SCSQLTSSKL. Residues 579–599 traverse the membrane as a helical segment; sequence FIGLIAVSNLFMGVYTGTLTV. The Extracellular segment spans residues 600-623; sequence LDTISWGQFAEFGIWWETGNGCKV. Cysteine 621 and cysteine 696 are oxidised to a cystine. A helical transmembrane segment spans residues 624-644; it reads AGFLAIFSSESAIFFLMLAAI. Over 645-666 the chain is Cytoplasmic; it reads ERSLSAKDIIKKEKHQHLRKFQ. A helical membrane pass occupies residues 667–687; sequence VASLLAVLLAAAAGCLPLFHI. Residues 688 to 706 lie on the Extracellular side of the membrane; it reads GEFSSSPLCLPFPTGETPS. Residues 707–727 form a helical membrane-spanning segment; that stretch reads LGFTVTLVLLNSLAFLIMVIT. Topologically, residues 728–759 are cytoplasmic; sequence YTKLYCTIEKEDLSENAESSMIKHVAWLIFTN. A helical membrane pass occupies residues 760–780; sequence CIFFCPVAFFSFAPLITAIYI. At 781 to 786 the chain is on the extracellular side; sequence SPEIMK. The chain crosses the membrane as a helical span at residues 787-807; the sequence is SVTLIFLPLPACLNPVLYVFF. Residues 808–955 are Cytoplasmic-facing; sequence NPKFKEDWKL…YAYNIPRMKD (148 aa).

It belongs to the G-protein coupled receptor 1 family.

It is found in the cell membrane. Its function is as follows. Receptor for R-spondins that potentiates the canonical Wnt signaling pathway and is involved in the formation of various organs. Upon binding to R-spondins (RSPO1, RSPO2, RSPO3 or RSPO4), associates with phosphorylated LRP6 and frizzled receptors that are activated by extracellular Wnt receptors, triggering the canonical Wnt signaling pathway to increase expression of target genes. In contrast to classical G-protein coupled receptors, does not activate heterotrimeric G-proteins to transduce the signal. Its function as activator of the Wnt signaling pathway is required for the development of various organs, including liver, kidney, intestine, bone, reproductive tract and eye. May play a role in regulating the circadian rhythms of plasma lipids. Required for proper development of GnRH neurons (gonadotropin-releasing hormone expressing neurons) that control the release of reproductive hormones from the pituitary gland. This is Leucine-rich repeat-containing G-protein coupled receptor 4 (lgr4) from Xenopus tropicalis (Western clawed frog).